The chain runs to 332 residues: Phosphate acyltransferase (332 aa).

The protein belongs to the PlsX family. Homodimer. Probably interacts with PlsY.

The protein resides in the cytoplasm. It carries out the reaction a fatty acyl-[ACP] + phosphate = an acyl phosphate + holo-[ACP]. Its pathway is lipid metabolism; phospholipid metabolism. Catalyzes the reversible formation of acyl-phosphate (acyl-PO(4)) from acyl-[acyl-carrier-protein] (acyl-ACP). This enzyme utilizes acyl-ACP as fatty acyl donor, but not acyl-CoA. The polypeptide is Phosphate acyltransferase (Nitratiruptor sp. (strain SB155-2)).